The following is a 241-amino-acid chain: B-cell receptor-associated protein 29 (241 aa).

The Lumenal portion of the chain corresponds to 1-6 (MTLQWA). A helical transmembrane segment spans residues 7–27 (AVATFLYAEIGLILIFCLPFI). At 28-43 (PPQRWQKIFSFNVWGK) the chain is on the cytoplasmic side. The helical transmembrane segment at 44–64 (IATFWNKAFLTIIILLIVLFL) threads the bilayer. Topologically, residues 65 to 103 (DAVREVRKYSSVHTIEKSSTSRPDAYEHTQMKLFRSQRN) are lumenal. A helical membrane pass occupies residues 104–124 (LYISGFSLFFWLVLRRLVTLI). Topologically, residues 125-241 (TQLAKELSNK…RLERGNKKRL (117 aa)) are cytoplasmic. Positions 166 to 233 (GKDEECVLEA…KEHSELQDRL (68 aa)) form a coiled coil. Residues 193 to 223 (KTSDALSKAQNDVMEMKMQSERLSKEYDQLL) form a disordered region. Basic and acidic residues predominate over residues 206–223 (MEMKMQSERLSKEYDQLL). Residues 238-241 (KKRL) carry the Di-lysine motif motif.

Belongs to the BCAP29/BCAP31 family. As to quaternary structure, homodimer and heterodimer with BCAP31. Binds CASP8 as a complex containing BCAP31, BCAP29, BCL2 and/or BCL2L1. Interacts with VAMP3, VAMP1 and membrane IgD immunoglobulins. May interact with ACTG1 and non-muscle myosin II.

Its subcellular location is the endoplasmic reticulum membrane. Its function is as follows. May play a role in anterograde transport of membrane proteins from the endoplasmic reticulum to the Golgi. May be involved in CASP8-mediated apoptosis. In Pongo abelii (Sumatran orangutan), this protein is B-cell receptor-associated protein 29 (BCAP29).